The chain runs to 218 residues: Twisted gastrulation protein homolog 1-B (218 aa).

Positions 1–25 are cleaved as a signal peptide; the sequence is MKPSFLHIPAAALLLCSLWILPIHC. Asn52, Asn81, and Asn147 each carry an N-linked (GlcNAc...) asparagine glycan.

It belongs to the twisted gastrulation protein family. In terms of assembly, binds directly to bmp2, bmp4 and bmp7 and can form a ternary complex with bmps and chordin, thus preventing the binding of bmps to their cell surface receptors.

It localises to the secreted. Its function is as follows. Involved in dorsal-ventral patterning, permitting peak BMP signaling by antagonizing the residual anti-BMP activity of the cleavage products of chrd. Functions to promote the formation of ventral mesoderm by increasing the activity of bmp7 and other BMPS. Seems to antagonize BMP signaling by forming ternary complexes with chrd and BMPs, thereby preventing BMPs from binding to their receptors. In addition to the anti-BMP function, also has pro-BMP activity, partly mediated by cleavage and degradation of chrd, which releases BMPs from ternary complexes. May be an important modulator of BMP-regulated cartilage development and chondrocyte differentiation. The sequence is that of Twisted gastrulation protein homolog 1-B (twsg1-b) from Xenopus laevis (African clawed frog).